The chain runs to 505 residues: Probable alpha-L-arabinofuranosidase C (505 aa).

N-linked (GlcNAc...) asparagine glycosylation is found at asparagine 152, asparagine 181, and asparagine 269.

Belongs to the glycosyl hydrolase 51 family.

It is found in the secreted. The enzyme catalyses Hydrolysis of terminal non-reducing alpha-L-arabinofuranoside residues in alpha-L-arabinosides.. It functions in the pathway glycan metabolism; L-arabinan degradation. Functionally, alpha-L-arabinofuranosidase involved in the degradation of arabinoxylan, a major component of plant hemicellulose. Acts only on small linear 1,5-alpha-linked L-arabinofuranosyl oligosaccharides. This is Probable alpha-L-arabinofuranosidase C (abfC) from Aspergillus niger (strain ATCC MYA-4892 / CBS 513.88 / FGSC A1513).